We begin with the raw amino-acid sequence, 301 residues long: Protein RESTRICTED TEV MOVEMENT 3 (301 aa).

The MATH domain maps to 6–134 (DKKITWTIKN…NGELKIVVEI (129 aa)). Residues 235–289 (KLDWLEKKLYEVSEKKENEEASETGLQEMEEELKDMKQKCLEMEALVEKEKAKVS) are a coiled coil.

As to quaternary structure, self-interacts. Interacts with RTM1.

Required for the restriction of long-distance movement of the pathogenic tobacco etch virus (TEV) without causing a hypersensitive response or inducing systemic acquired resistance. This chain is Protein RESTRICTED TEV MOVEMENT 3 (RTM3), found in Arabidopsis thaliana (Mouse-ear cress).